Here is a 230-residue protein sequence, read N- to C-terminus: 2,3-bisphosphoglycerate-dependent phosphoglycerate mutase (230 aa).

Substrate is bound by residues 8 to 15 (RHGESEWN), 21 to 22 (TG), R60, 87 to 90 (ERHY), K98, 114 to 115 (RR), and 183 to 184 (GN). H9 acts as the Tele-phosphohistidine intermediate in catalysis. E87 acts as the Proton donor/acceptor in catalysis.

This sequence belongs to the phosphoglycerate mutase family. BPG-dependent PGAM subfamily.

It carries out the reaction (2R)-2-phosphoglycerate = (2R)-3-phosphoglycerate. It functions in the pathway carbohydrate degradation; glycolysis; pyruvate from D-glyceraldehyde 3-phosphate: step 3/5. In terms of biological role, catalyzes the interconversion of 2-phosphoglycerate and 3-phosphoglycerate. The protein is 2,3-bisphosphoglycerate-dependent phosphoglycerate mutase of Streptococcus pneumoniae (strain P1031).